The following is a 501-amino-acid chain: Phenylalanine--tRNA ligase alpha subunit (501 aa).

2 residues coordinate L-phenylalanine: threonine 340 and phenylalanine 423. Glutamate 425 contributes to the Mg(2+) binding site. Phenylalanine 448 serves as a coordination point for L-phenylalanine.

Belongs to the class-II aminoacyl-tRNA synthetase family. Phe-tRNA synthetase alpha subunit type 2 subfamily. Tetramer of two alpha and two beta subunits. It depends on Mg(2+) as a cofactor.

It is found in the cytoplasm. It catalyses the reaction tRNA(Phe) + L-phenylalanine + ATP = L-phenylalanyl-tRNA(Phe) + AMP + diphosphate + H(+). The polypeptide is Phenylalanine--tRNA ligase alpha subunit (Methanococcus vannielii (strain ATCC 35089 / DSM 1224 / JCM 13029 / OCM 148 / SB)).